The sequence spans 83 residues: Cytochrome b559 subunit alpha (83 aa).

A helical membrane pass occupies residues 21–35 (VIHSITIPSLFIAGW). Residue His-23 participates in heme binding.

The protein belongs to the PsbE/PsbF family. Heterodimer of an alpha subunit and a beta subunit. PSII is composed of 1 copy each of membrane proteins PsbA, PsbB, PsbC, PsbD, PsbE, PsbF, PsbH, PsbI, PsbJ, PsbK, PsbL, PsbM, PsbT, PsbX, PsbY, PsbZ, Psb30/Ycf12, at least 3 peripheral proteins of the oxygen-evolving complex and a large number of cofactors. It forms dimeric complexes. Requires heme b as cofactor.

Its subcellular location is the plastid. The protein localises to the chloroplast thylakoid membrane. Its function is as follows. This b-type cytochrome is tightly associated with the reaction center of photosystem II (PSII). PSII is a light-driven water:plastoquinone oxidoreductase that uses light energy to abstract electrons from H(2)O, generating O(2) and a proton gradient subsequently used for ATP formation. It consists of a core antenna complex that captures photons, and an electron transfer chain that converts photonic excitation into a charge separation. The polypeptide is Cytochrome b559 subunit alpha (Tupiella akineta (Green alga)).